We begin with the raw amino-acid sequence, 157 residues long: 2-C-methyl-D-erythritol 2,4-cyclodiphosphate synthase (157 aa).

Positions 8 and 10 each coordinate a divalent metal cation. 4-CDP-2-C-methyl-D-erythritol 2-phosphate-binding positions include 8-10 (DVH) and 34-35 (HS). Histidine 42 provides a ligand contact to a divalent metal cation. 4-CDP-2-C-methyl-D-erythritol 2-phosphate-binding positions include 56–58 (DIG), 61–65 (FPDTD), 100–106 (AQAPKMA), 132–135 (TTTE), phenylalanine 139, and arginine 142.

This sequence belongs to the IspF family. Homotrimer. It depends on a divalent metal cation as a cofactor.

It carries out the reaction 4-CDP-2-C-methyl-D-erythritol 2-phosphate = 2-C-methyl-D-erythritol 2,4-cyclic diphosphate + CMP. It participates in isoprenoid biosynthesis; isopentenyl diphosphate biosynthesis via DXP pathway; isopentenyl diphosphate from 1-deoxy-D-xylulose 5-phosphate: step 4/6. Functionally, involved in the biosynthesis of isopentenyl diphosphate (IPP) and dimethylallyl diphosphate (DMAPP), two major building blocks of isoprenoid compounds. Catalyzes the conversion of 4-diphosphocytidyl-2-C-methyl-D-erythritol 2-phosphate (CDP-ME2P) to 2-C-methyl-D-erythritol 2,4-cyclodiphosphate (ME-CPP) with a corresponding release of cytidine 5-monophosphate (CMP). This Pseudomonas fluorescens (strain Pf0-1) protein is 2-C-methyl-D-erythritol 2,4-cyclodiphosphate synthase.